Consider the following 208-residue polypeptide: UPF0637 protein BCAH820_3975 (208 aa).

This sequence belongs to the UPF0637 family.

The chain is UPF0637 protein BCAH820_3975 from Bacillus cereus (strain AH820).